A 273-amino-acid chain; its full sequence is Large ribosomal subunit protein uL2 (273 aa).

Disordered regions lie at residues 28 to 53 (KPFA…TTRH) and 221 to 273 (RGTA…RRSK). Low complexity predominate over residues 39–48 (KSGGRNNNGR).

It belongs to the universal ribosomal protein uL2 family. As to quaternary structure, part of the 50S ribosomal subunit. Forms a bridge to the 30S subunit in the 70S ribosome.

In terms of biological role, one of the primary rRNA binding proteins. Required for association of the 30S and 50S subunits to form the 70S ribosome, for tRNA binding and peptide bond formation. It has been suggested to have peptidyltransferase activity; this is somewhat controversial. Makes several contacts with the 16S rRNA in the 70S ribosome. The polypeptide is Large ribosomal subunit protein uL2 (Klebsiella pneumoniae (strain 342)).